Consider the following 711-residue polypeptide: DNA topoisomerase 3 (711 aa).

One can recognise a Toprim domain in the interval 2-135 (KSLILAEKPS…IRRLWISSVT (134 aa)). E8 and D104 together coordinate Mg(2+). Residues 152 to 580 (YNDLYYAALA…EMKDFTKDVV (429 aa)) form the Topo IA-type catalytic domain. Residues 186–191 (SLGRVQ) are interaction with DNA. Y305 functions as the O-(5'-phospho-DNA)-tyrosine intermediate in the catalytic mechanism. Residues 691-711 (MNKNEGLDNNPFKDALKNLNL) are disordered.

It belongs to the type IA topoisomerase family. The cofactor is Mg(2+).

It carries out the reaction ATP-independent breakage of single-stranded DNA, followed by passage and rejoining.. Functionally, releases the supercoiling and torsional tension of DNA, which is introduced during the DNA replication and transcription, by transiently cleaving and rejoining one strand of the DNA duplex. Introduces a single-strand break via transesterification at a target site in duplex DNA. The scissile phosphodiester is attacked by the catalytic tyrosine of the enzyme, resulting in the formation of a DNA-(5'-phosphotyrosyl)-enzyme intermediate and the expulsion of a 3'-OH DNA strand. The free DNA strand then undergoes passage around the unbroken strand, thus removing DNA supercoils. Finally, in the religation step, the DNA 3'-OH attacks the covalent intermediate to expel the active-site tyrosine and restore the DNA phosphodiester backbone. This is DNA topoisomerase 3 from Staphylococcus aureus (strain Mu50 / ATCC 700699).